Consider the following 304-residue polypeptide: Tyrosine recombinase XerD (304 aa).

The 86-residue stretch at 6 to 91 (EPWRKTLETF…AIRSFHKFLL (86 aa)) folds into the Core-binding (CB) domain. The 187-residue stretch at 112–298 (YLPSVLTIEE…DRSFIKEVHK (187 aa)) folds into the Tyr recombinase domain. Residues R155, K179, H250, R253, and H276 contribute to the active site. Catalysis depends on Y285, which acts as the O-(3'-phospho-DNA)-tyrosine intermediate.

Belongs to the 'phage' integrase family. XerD subfamily. In terms of assembly, forms a cyclic heterotetrameric complex composed of two molecules of XerC and two molecules of XerD.

It localises to the cytoplasm. In terms of biological role, site-specific tyrosine recombinase, which acts by catalyzing the cutting and rejoining of the recombining DNA molecules. The XerC-XerD complex is essential to convert dimers of the bacterial chromosome into monomers to permit their segregation at cell division. It also contributes to the segregational stability of plasmids. This Chlorobaculum tepidum (strain ATCC 49652 / DSM 12025 / NBRC 103806 / TLS) (Chlorobium tepidum) protein is Tyrosine recombinase XerD.